Consider the following 169-residue polypeptide: Der GTPase-activating protein YihI (169 aa).

2 disordered regions span residues 1–99 (MKPS…QAEL) and 146–169 (SYDD…LRGN). Basic residues predominate over residues 10 to 19 (SKGHAKARRK). Positions 20–30 (TREELDQEARD) are enriched in basic and acidic residues. Residues 31-40 (RKRQKKRRGH) are compositionally biased toward basic residues. Over residues 49-58 (GNTTSGSKGQ) the composition is skewed to polar residues. Over residues 147 to 159 (YDDDEEEEEDEKQ) the composition is skewed to acidic residues. A compositionally biased stretch (basic and acidic residues) spans 160–169 (EDMMRLLRGN).

Belongs to the YihI family. Interacts with Der.

Its function is as follows. A GTPase-activating protein (GAP) that modifies Der/EngA GTPase function. May play a role in ribosome biogenesis. The protein is Der GTPase-activating protein YihI of Escherichia coli O81 (strain ED1a).